The primary structure comprises 446 residues: 3-phosphoshikimate 1-carboxyvinyltransferase (446 aa).

Residues 1 to 20 (MSTWPAPSTATPVHATVTVP) form a disordered region. The 3-phosphoshikimate site is built by Lys-23, Ser-24, and Arg-28. Lys-23 serves as a coordination point for phosphoenolpyruvate. Phosphoenolpyruvate contacts are provided by Gly-100 and Arg-128. The 3-phosphoshikimate site is built by Ser-171, Ser-172, Gln-173, Ser-200, Glu-315, and His-344. Position 173 (Gln-173) interacts with phosphoenolpyruvate. Glu-315 serves as the catalytic Proton acceptor. Residues Arg-348, Arg-389, and Lys-414 each coordinate phosphoenolpyruvate.

This sequence belongs to the EPSP synthase family. As to quaternary structure, monomer.

The protein resides in the cytoplasm. It carries out the reaction 3-phosphoshikimate + phosphoenolpyruvate = 5-O-(1-carboxyvinyl)-3-phosphoshikimate + phosphate. The protein operates within metabolic intermediate biosynthesis; chorismate biosynthesis; chorismate from D-erythrose 4-phosphate and phosphoenolpyruvate: step 6/7. Its function is as follows. Catalyzes the transfer of the enolpyruvyl moiety of phosphoenolpyruvate (PEP) to the 5-hydroxyl of shikimate-3-phosphate (S3P) to produce enolpyruvyl shikimate-3-phosphate and inorganic phosphate. The polypeptide is 3-phosphoshikimate 1-carboxyvinyltransferase (Mycolicibacterium vanbaalenii (strain DSM 7251 / JCM 13017 / BCRC 16820 / KCTC 9966 / NRRL B-24157 / PYR-1) (Mycobacterium vanbaalenii)).